Reading from the N-terminus, the 338-residue chain is tRNA N6-adenosine threonylcarbamoyltransferase (338 aa).

His111 and His115 together coordinate Fe cation. Substrate-binding positions include Leu134 to Gly138, Asp167, Gly180, and Asn272. Asp300 contacts Fe cation.

It belongs to the KAE1 / TsaD family. Fe(2+) is required as a cofactor.

The protein resides in the cytoplasm. The enzyme catalyses L-threonylcarbamoyladenylate + adenosine(37) in tRNA = N(6)-L-threonylcarbamoyladenosine(37) in tRNA + AMP + H(+). Required for the formation of a threonylcarbamoyl group on adenosine at position 37 (t(6)A37) in tRNAs that read codons beginning with adenine. Is involved in the transfer of the threonylcarbamoyl moiety of threonylcarbamoyl-AMP (TC-AMP) to the N6 group of A37, together with TsaE and TsaB. TsaD likely plays a direct catalytic role in this reaction. The chain is tRNA N6-adenosine threonylcarbamoyltransferase from Vibrio atlanticus (strain LGP32) (Vibrio splendidus (strain Mel32)).